We begin with the raw amino-acid sequence, 358 residues long: MKPFPRAEISAQALKNNLSRLRQIAPNSSVMAVVKANGYGHGLLNVASCLTEADGFGLARLEEALALRAGGVKAKLVLLEGFFRQVDLTTLVEHGIDTVIHNEVQLDMLENASLSKPVTVWLKLDSGMHRLGFTPEQFAQVYARLEACPQVAKPINIMSHFACADEPDNPMTQEQLQVFEALTKNSKGYRTLANSAGTLYWPDSQADWIRPGIALYGVSPVIGDLGRNHGLEPAMKLVSQLIAVREHKAGQPVGYGCFWHAKADTRLGVVAIGYGDGYPRNAPEGTPVWVNGRRVPVVGRVSMDMLTVDLGIDAKDSIGDDVVLWGKELPVEEVAEHIGTIAYELVTKLTPRVAVCLD.

The active-site Proton acceptor; specific for D-alanine is Lys-35. At Lys-35 the chain carries N6-(pyridoxal phosphate)lysine. Position 130 (Arg-130) interacts with substrate. Tyr-255 (proton acceptor; specific for L-alanine) is an active-site residue. Met-303 provides a ligand contact to substrate.

This sequence belongs to the alanine racemase family. Pyridoxal 5'-phosphate is required as a cofactor.

It carries out the reaction L-alanine = D-alanine. It functions in the pathway amino-acid biosynthesis; D-alanine biosynthesis; D-alanine from L-alanine: step 1/1. In terms of biological role, catalyzes the interconversion of L-alanine and D-alanine. May also act on other amino acids. The chain is Alanine racemase (alr) from Shewanella woodyi (strain ATCC 51908 / MS32).